A 690-amino-acid chain; its full sequence is Eukaryotic translation initiation factor 3 subunit B (690 aa).

Residues 1-11 show a composition bias toward basic and acidic residues; sequence MAKKKSEDHSG. Residues 1–33 are disordered; the sequence is MAKKKSEDHSGADANDSDYNEEPNFDDPPNFVD. Residues 15 to 25 are compositionally biased toward acidic residues; that stretch reads NDSDYNEEPNF. One can recognise an RRM domain in the interval 57–141; that stretch reads SVVVVDNMPK…YTFAVNLFTD (85 aa). 5 WD repeats span residues 207–246, 292–331, 334–369, 442–484, and 530–575; these read TRERFTDTFVKWSPLGTYVVTFHKPGVAIWGGSSFQKIQK, GDGMSVLSMFRWSHDDKYVARMGESSIHIYETPSFYLLDL, IKIPGIRGFSWSPTDNVIAYWVEEQNQIPARVTLMK, EIRE…KPSL, and PDHF…IKRT. Positions 613 to 646 form a coiled coil; the sequence is EQKDRLRLTRASKELLEKRAQLRETFMEYRNKRI.

It belongs to the eIF-3 subunit B family. Component of the eukaryotic translation initiation factor 3 (eIF-3) complex. The eIF-3 complex interacts with pix. Interacts with mxt.

It localises to the cytoplasm. RNA-binding component of the eukaryotic translation initiation factor 3 (eIF-3) complex, which is involved in protein synthesis of a specialized repertoire of mRNAs and, together with other initiation factors, stimulates binding of mRNA and methionyl-tRNAi to the 40S ribosome. The eIF-3 complex specifically targets and initiates translation of a subset of mRNAs involved in cell proliferation. The chain is Eukaryotic translation initiation factor 3 subunit B from Drosophila grimshawi (Hawaiian fruit fly).